A 36-amino-acid polypeptide reads, in one-letter code: Pancreatic polypeptide (36 aa).

Tyrosine 36 carries the tyrosine amide modification.

It belongs to the NPY family.

It localises to the secreted. Its function is as follows. Hormone secreted by pancreatic cells that acts as a regulator of pancreatic and gastrointestinal functions. This chain is Pancreatic polypeptide (PPY), found in Struthio camelus (Common ostrich).